A 104-amino-acid polypeptide reads, in one-letter code: Large ribosomal subunit protein uL23 (104 aa).

It belongs to the universal ribosomal protein uL23 family. As to quaternary structure, part of the 50S ribosomal subunit. Contacts protein L29, and trigger factor when it is bound to the ribosome.

In terms of biological role, one of the early assembly proteins it binds 23S rRNA. One of the proteins that surrounds the polypeptide exit tunnel on the outside of the ribosome. Forms the main docking site for trigger factor binding to the ribosome. This is Large ribosomal subunit protein uL23 from Cupriavidus metallidurans (strain ATCC 43123 / DSM 2839 / NBRC 102507 / CH34) (Ralstonia metallidurans).